The chain runs to 692 residues: Centrosomal protein of 83 kDa (692 aa).

Coiled-coil stretches lie at residues 32–625 and 656–689; these read RCEH…SLIL and HLQEEQHQRELSLLRKRLEELETTQRKQLEELGS. Residue Ser-689 is modified to Phosphoserine.

It belongs to the CEP83 family. As to quaternary structure, interacts with CEP164 and IFT20.

The protein resides in the cytoplasm. The protein localises to the cytoskeleton. It localises to the microtubule organizing center. Its subcellular location is the centrosome. It is found in the centriole. Functionally, component of the distal appendage region of the centriole involved in the initiation of primary cilium assembly. May collaborate with IFT20 in the trafficking of ciliary membrane proteins from the Golgi complex to the cilium during the initiation of primary cilium assembly. The sequence is that of Centrosomal protein of 83 kDa (Cep83) from Mus musculus (Mouse).